A 250-amino-acid chain; its full sequence is MSDSAVATSASPVIVQAASGEKKVSTKKAAATPKSKKSTAAPPSHPPTQQMVDASIKNLKERGGSSLLAIKKYIGATYKCDAQKLAPFIKKYLKNAVANGKLIQTKGKGASGSFKLSRSAKKDAKPKASAVEKKTKKVNASAAAATKRSSSTSTTKKAAGAADKKLSKSAAAKKNVEKKKADKEKAKDAKKTGTIKAKLTTAKAKSSATKPKTPKPKTTSAKPKKVVSATTPKKTAVKKPKAKTASATKK.

2 disordered regions span residues 17–53 (AASG…QMVD) and 104–250 (QTKG…ATKK). Residues 27–42 (KKAAATPKSKKSTAAP) are compositionally biased toward low complexity. Residues 44-118 (SHPPTQQMVD…GASGSFKLSR (75 aa)) enclose the H15 domain. Residues 120 to 133 (AKKDAKPKASAVEK) show a composition bias toward basic and acidic residues. Positions 138–161 (VNASAAAATKRSSSTSTTKKAAGA) are enriched in low complexity. A compositionally biased stretch (basic and acidic residues) spans 174 to 191 (KNVEKKKADKEKAKDAKK). The segment covering 192–234 (TGTIKAKLTTAKAKSSATKPKTPKPKTTSAKPKKVVSATTPKK) has biased composition (low complexity). Positions 235–250 (TAVKKPKAKTASATKK) are enriched in basic residues.

Belongs to the histone H1/H5 family.

The protein resides in the nucleus. Its subcellular location is the chromosome. Its function is as follows. Histones H1 are necessary for the condensation of nucleosome chains into higher-order structures. The chain is Histone H1.3 (His1.3) from Drosophila virilis (Fruit fly).